The sequence spans 505 residues: tRNA-2-methylthio-N(6)-dimethylallyladenosine synthase (505 aa).

Residues arginine 14–valine 132 enclose the MTTase N-terminal domain. [4Fe-4S] cluster is bound by residues cysteine 23, cysteine 61, cysteine 95, cysteine 169, cysteine 173, and cysteine 176. The 232-residue stretch at arginine 155–glutamate 386 folds into the Radical SAM core domain. In terms of domain architecture, TRAM spans lysine 388 to valine 456.

This sequence belongs to the methylthiotransferase family. MiaB subfamily. As to quaternary structure, monomer. The cofactor is [4Fe-4S] cluster.

The protein resides in the cytoplasm. It catalyses the reaction N(6)-dimethylallyladenosine(37) in tRNA + (sulfur carrier)-SH + AH2 + 2 S-adenosyl-L-methionine = 2-methylsulfanyl-N(6)-dimethylallyladenosine(37) in tRNA + (sulfur carrier)-H + 5'-deoxyadenosine + L-methionine + A + S-adenosyl-L-homocysteine + 2 H(+). Functionally, catalyzes the methylthiolation of N6-(dimethylallyl)adenosine (i(6)A), leading to the formation of 2-methylthio-N6-(dimethylallyl)adenosine (ms(2)i(6)A) at position 37 in tRNAs that read codons beginning with uridine. In Streptomyces coelicolor (strain ATCC BAA-471 / A3(2) / M145), this protein is tRNA-2-methylthio-N(6)-dimethylallyladenosine synthase.